The chain runs to 150 residues: MKCPFCNFEESKVVDSRATDDNTTIRRRRECLNCNKRYTTYEKIEDFPVLVVKKDLTRENFNKEKIINGLIIACQKRPVSRKQIEDIAYEIEKSISNRMVTEIASKDIGEMIMDKLKQVDEISYVRFASVYRQFKDINTFLEEIKNLVVN.

A zinc finger spans residues 3–34 (CPFCNFEESKVVDSRATDDNTTIRRRRECLNC). The ATP-cone domain occupies 49 to 139 (VLVVKKDLTR…VYRQFKDINT (91 aa)).

This sequence belongs to the NrdR family. It depends on Zn(2+) as a cofactor.

Functionally, negatively regulates transcription of bacterial ribonucleotide reductase nrd genes and operons by binding to NrdR-boxes. The polypeptide is Transcriptional repressor NrdR (Clostridium botulinum (strain Alaska E43 / Type E3)).